Reading from the N-terminus, the 287-residue chain is ATP synthase gamma chain (287 aa).

The protein belongs to the ATPase gamma chain family. F-type ATPases have 2 components, CF(1) - the catalytic core - and CF(0) - the membrane proton channel. CF(1) has five subunits: alpha(3), beta(3), gamma(1), delta(1), epsilon(1). CF(0) has three main subunits: a, b and c.

The protein localises to the cell inner membrane. Its function is as follows. Produces ATP from ADP in the presence of a proton gradient across the membrane. The gamma chain is believed to be important in regulating ATPase activity and the flow of protons through the CF(0) complex. The chain is ATP synthase gamma chain from Methylococcus capsulatus (strain ATCC 33009 / NCIMB 11132 / Bath).